Reading from the N-terminus, the 42-residue chain is Pelovaterin (42 aa).

3 cysteine pairs are disulfide-bonded: Cys8/Cys38, Cys16/Cys32, and Cys24/Cys39.

It localises to the secreted. It is found in the extracellular space. The protein localises to the extracellular matrix. Functionally, induces the nucleation and stabilization of vaterite, one of the crystalline polymorphs of calcium carbonate. Exhibits strong antimicrobial activity against Pseudomonas aeruginosa and Proteus vulgaris. This Pelodiscus sinensis (Chinese softshell turtle) protein is Pelovaterin.